The primary structure comprises 297 residues: Formylmethanofuran--tetrahydromethanopterin formyltransferase (297 aa).

This sequence belongs to the FTR family. In terms of assembly, homotetramer.

Its subcellular location is the cytoplasm. The catalysed reaction is N-formylmethanofuran + 5,6,7,8-tetrahydromethanopterin + H(+) = N(5)-formyl-5,6,7,8-tetrahydromethanopterin + methanofuran. It participates in metabolic intermediate metabolism; lactate oxidation. Its function is as follows. Catalyzes the transfer of a formyl group from 5-formyl tetrahydromethanopterin (5-formyl-H(4)MPT) to methanofuran (MFR) to produce formylmethanofuran (formyl-MFR) and tetrahydromethanopterin (H(4)MPT). The polypeptide is Formylmethanofuran--tetrahydromethanopterin formyltransferase (Archaeoglobus fulgidus (strain ATCC 49558 / DSM 4304 / JCM 9628 / NBRC 100126 / VC-16)).